The chain runs to 534 residues: Transcription factor RBF1 (534 aa).

The disordered stretch occupies residues Met-1–Ser-36. Residues Ala-77–Leu-147 adopt a coiled-coil conformation. Disordered regions lie at residues Ala-262 to Glu-285, Gln-353 to Ala-372, Gln-402 to Leu-439, and Thr-477 to Leu-534. Residues Asn-267–Glu-285 are compositionally biased toward basic and acidic residues. Residues His-332–Gly-386 adopt a coiled-coil conformation. Low complexity predominate over residues Gln-402–Thr-435.

This sequence belongs to the RBF1 family.

The protein resides in the nucleus. It localises to the chromosome. The protein localises to the telomere. In terms of biological role, transcriptional activator that binds to the RPG box and to telomeres. Involved in the regulation of the transition between yeast and filamentous forms and plays a role in virulence. Induces expression of HWP1, a major hyphal cell protein and virulence factor. The polypeptide is Transcription factor RBF1 (RBF1) (Candida albicans (strain SC5314 / ATCC MYA-2876) (Yeast)).